Reading from the N-terminus, the 132-residue chain is Large ribosomal subunit protein bL19 (132 aa).

The protein belongs to the bacterial ribosomal protein bL19 family.

Its function is as follows. This protein is located at the 30S-50S ribosomal subunit interface and may play a role in the structure and function of the aminoacyl-tRNA binding site. This chain is Large ribosomal subunit protein bL19, found in Nitrosomonas europaea (strain ATCC 19718 / CIP 103999 / KCTC 2705 / NBRC 14298).